Here is a 302-residue protein sequence, read N- to C-terminus: L-threonate dehydrogenase (302 aa).

NAD(+)-binding positions include 7 to 35 and Thr-102; that span reads FHVG…TWGA. Residue Lys-178 is part of the active site. Lys-246 provides a ligand contact to NAD(+).

This sequence belongs to the HIBADH-related family. L-threonate dehydrogenase subfamily.

It catalyses the reaction L-threonate + NAD(+) = 2-dehydro-L-erythronate + NADH + H(+). Functionally, catalyzes oxidation of L-threonate to 2-oxo-tetronate. Can use either NAD(+) or NADP(+) as cosubstrate, with a preference for NAD(+). The protein is L-threonate dehydrogenase of Escherichia coli (strain K12).